The chain runs to 118 residues: Ribonuclease P protein component (118 aa).

It belongs to the RnpA family. Consists of a catalytic RNA component (M1 or rnpB) and a protein subunit.

The enzyme catalyses Endonucleolytic cleavage of RNA, removing 5'-extranucleotides from tRNA precursor.. RNaseP catalyzes the removal of the 5'-leader sequence from pre-tRNA to produce the mature 5'-terminus. It can also cleave other RNA substrates such as 4.5S RNA. The protein component plays an auxiliary but essential role in vivo by binding to the 5'-leader sequence and broadening the substrate specificity of the ribozyme. This chain is Ribonuclease P protein component, found in Petrotoga mobilis (strain DSM 10674 / SJ95).